A 406-amino-acid chain; its full sequence is MARRIVVESYPYPRVEDLQVELVERKGLGHPDTICDAAAEAVSRELSKYYLERFGKILHHNVDKVLLVGGQAAPRLGGGEVLQPIYILVSGRVTTEVRTGGGVESVPVGPIILRAVKNYIRENFRFLDPEEHVIVDYRVGRGSVDLVGIFEAEDKVPLANDTSIGSGHAPLSTLERLVLETERILNSRETKERLPAVGEDVKVMGVRDGKSITLTVAMAVVSSQVGSVSDYLAVKEEAESLILDLASRIAPDYDVRVNINTGDIPEKKILYLTVTGTSAEHGDDGATGRGNRVNGLITPMRPMSMEAAAGKNPVNHVGKIYNVVANEMAALIHREVKGVEEVYVKLVSQIGKPIDRPRIVDVKVRMEGGREVTADAKREIEAIANSVLDGITGYTEKLVRGDITVY.

140-145 (GRGSVD) is a binding site for ATP.

Belongs to the AdoMet synthase 2 family. Mg(2+) serves as cofactor.

The catalysed reaction is L-methionine + ATP + H2O = S-adenosyl-L-methionine + phosphate + diphosphate. It participates in amino-acid biosynthesis; S-adenosyl-L-methionine biosynthesis; S-adenosyl-L-methionine from L-methionine: step 1/1. Functionally, catalyzes the formation of S-adenosylmethionine from methionine and ATP. The protein is S-adenosylmethionine synthase (mat) of Aeropyrum pernix (strain ATCC 700893 / DSM 11879 / JCM 9820 / NBRC 100138 / K1).